We begin with the raw amino-acid sequence, 104 residues long: Small ribosomal subunit protein bS18c (104 aa).

It belongs to the bacterial ribosomal protein bS18 family. In terms of assembly, part of the 30S ribosomal subunit.

Its subcellular location is the plastid. The protein resides in the chloroplast. The chain is Small ribosomal subunit protein bS18c from Lotus japonicus (Lotus corniculatus var. japonicus).